The sequence spans 445 residues: tRNA-2-methylthio-N(6)-dimethylallyladenosine synthase (445 aa).

Positions 13–129 (KKLFIKTYGC…LPAMARAGRG (117 aa)) constitute an MTTase N-terminal domain. Residues Cys22, Cys58, Cys92, Cys163, Cys167, and Cys170 each contribute to the [4Fe-4S] cluster site. One can recognise a Radical SAM core domain in the interval 149–383 (TRRAPAAFLT…LTSQQKAAQE (235 aa)). The TRAM domain maps to 383–445 (EGMVGRELGV…PNSLAGVLAA (63 aa)).

It belongs to the methylthiotransferase family. MiaB subfamily. Monomer. Requires [4Fe-4S] cluster as cofactor.

The protein localises to the cytoplasm. It carries out the reaction N(6)-dimethylallyladenosine(37) in tRNA + (sulfur carrier)-SH + AH2 + 2 S-adenosyl-L-methionine = 2-methylsulfanyl-N(6)-dimethylallyladenosine(37) in tRNA + (sulfur carrier)-H + 5'-deoxyadenosine + L-methionine + A + S-adenosyl-L-homocysteine + 2 H(+). In terms of biological role, catalyzes the methylthiolation of N6-(dimethylallyl)adenosine (i(6)A), leading to the formation of 2-methylthio-N6-(dimethylallyl)adenosine (ms(2)i(6)A) at position 37 in tRNAs that read codons beginning with uridine. The chain is tRNA-2-methylthio-N(6)-dimethylallyladenosine synthase from Paracoccus denitrificans (strain Pd 1222).